The primary structure comprises 70 residues: UPF0519 protein B (70 aa).

Belongs to the UPF0519 family.

This is UPF0519 protein B (sigN122) from Dictyostelium discoideum (Social amoeba).